The chain runs to 25 residues: Granule-bound starch synthase 1, chloroplastic/amyloplastic (25 aa).

Lys-16 lines the ADP-alpha-D-glucose pocket.

The protein belongs to the glycosyltransferase 1 family. Bacterial/plant glycogen synthase subfamily. In terms of tissue distribution, expressed in endosperm.

It localises to the plastid. Its subcellular location is the chloroplast. It is found in the amyloplast. The catalysed reaction is an NDP-alpha-D-glucose + [(1-&gt;4)-alpha-D-glucosyl](n) = [(1-&gt;4)-alpha-D-glucosyl](n+1) + a ribonucleoside 5'-diphosphate + H(+). It functions in the pathway glycan biosynthesis; starch biosynthesis. In terms of biological role, required for the synthesis of amylose in endosperm. The sequence is that of Granule-bound starch synthase 1, chloroplastic/amyloplastic from Fagopyrum esculentum (Common buckwheat).